Here is a 248-residue protein sequence, read N- to C-terminus: Protein GrpE (248 aa).

The interval 229-248 (AAPKEDTLPAQENQSSPADS) is disordered. The span at 238 to 248 (AQENQSSPADS) shows a compositional bias: polar residues.

This sequence belongs to the GrpE family. As to quaternary structure, homodimer.

The protein localises to the cytoplasm. Participates actively in the response to hyperosmotic and heat shock by preventing the aggregation of stress-denatured proteins, in association with DnaK and GrpE. It is the nucleotide exchange factor for DnaK and may function as a thermosensor. Unfolded proteins bind initially to DnaJ; upon interaction with the DnaJ-bound protein, DnaK hydrolyzes its bound ATP, resulting in the formation of a stable complex. GrpE releases ADP from DnaK; ATP binding to DnaK triggers the release of the substrate protein, thus completing the reaction cycle. Several rounds of ATP-dependent interactions between DnaJ, DnaK and GrpE are required for fully efficient folding. The polypeptide is Protein GrpE (Trichormus variabilis (strain ATCC 29413 / PCC 7937) (Anabaena variabilis)).